A 215-amino-acid polypeptide reads, in one-letter code: Adenylate kinase (215 aa).

ATP is bound at residue 14–19; sequence GVGKGT. Residues 34–63 are NMP; sequence STGDIFRSVMQEQGALSQTLAHYMNQGLYV. AMP is bound by residues threonine 35, arginine 40, 61–63, 91–94, and glutamine 98; these read LYV and GYPR. Residues 128–165 are LID; sequence NRLVCPSCGSVYNKQSKPPLKANQCDRCHATLQARNDD. Arginine 129 provides a ligand contact to ATP. The Zn(2+) site is built by cysteine 132 and cysteine 135. Residue 138–139 participates in ATP binding; it reads VY. Residues cysteine 152 and cysteine 155 each coordinate Zn(2+). The AMP site is built by arginine 162 and arginine 173. Glutamine 211 contacts ATP.

The protein belongs to the adenylate kinase family. In terms of assembly, monomer.

It localises to the cytoplasm. The enzyme catalyses AMP + ATP = 2 ADP. Its pathway is purine metabolism; AMP biosynthesis via salvage pathway; AMP from ADP: step 1/1. Functionally, catalyzes the reversible transfer of the terminal phosphate group between ATP and AMP. Plays an important role in cellular energy homeostasis and in adenine nucleotide metabolism. In Mycoplasma pneumoniae (strain ATCC 29342 / M129 / Subtype 1) (Mycoplasmoides pneumoniae), this protein is Adenylate kinase.